Reading from the N-terminus, the 141-residue chain is uncharacterized protein (141 aa).

Its subcellular location is the mitochondrion. This is an uncharacterized protein from Arabidopsis thaliana (Mouse-ear cress).